The sequence spans 418 residues: Serpin A9 (418 aa).

Positions 1–25 (MGSSSFYRVLLLVGFCAPIFCMLSS) are cleaved as a signal peptide. N-linked (GlcNAc...) asparagine glycans are attached at residues Asn-103, Asn-213, and Asn-224.

The protein belongs to the serpin family.

Its subcellular location is the secreted. This is Serpin A9 (Serpina9) from Mus musculus (Mouse).